Here is a 234-residue protein sequence, read N- to C-terminus: MRIIVADCSAEYSERLNASLPLAKRVLLIKADNSLLIFSELGSYKPLNWMSAPCSIRDITPDHADDDVDTEVPQKVIRASADKSNDVLEVTLQRIYSDESYDLGEDPGLIKDGVEDHLQKYLAEQIERIGKGAKLVRREYPTAIGPVDIMAIDGNGEHVAIEIKRNGGIDGVEQLTRYCDLLNRDPLLAPVHGIFAAQTITPQARVLAQDRGFKCLLLDYEEMKGTEDDSLRLF.

Belongs to the NucS endonuclease family.

Its subcellular location is the cytoplasm. Its function is as follows. Cleaves both 3' and 5' ssDNA extremities of branched DNA structures. The protein is Endonuclease NucS of Bifidobacterium adolescentis (strain ATCC 15703 / DSM 20083 / NCTC 11814 / E194a).